Reading from the N-terminus, the 151-residue chain is Transcriptional repressor NrdR (151 aa).

A zinc finger spans residues 3-34; that stretch reads CPHCGNCDDKVMESRTLAQGDCIRRRRECLAC. Residues 49–141 enclose the ATP-cone domain; that stretch reads FMVIKKDGRR…VYKQFSNLDE (93 aa).

Belongs to the NrdR family. The cofactor is Zn(2+).

Its function is as follows. Negatively regulates transcription of bacterial ribonucleotide reductase nrd genes and operons by binding to NrdR-boxes. The polypeptide is Transcriptional repressor NrdR (Treponema denticola (strain ATCC 35405 / DSM 14222 / CIP 103919 / JCM 8153 / KCTC 15104)).